Reading from the N-terminus, the 374-residue chain is 4-hydroxy-3-methylbut-2-en-1-yl diphosphate synthase (flavodoxin) (374 aa).

Cys-270, Cys-273, Cys-305, and Glu-312 together coordinate [4Fe-4S] cluster.

The protein belongs to the IspG family. It depends on [4Fe-4S] cluster as a cofactor.

The catalysed reaction is (2E)-4-hydroxy-3-methylbut-2-enyl diphosphate + oxidized [flavodoxin] + H2O + 2 H(+) = 2-C-methyl-D-erythritol 2,4-cyclic diphosphate + reduced [flavodoxin]. It participates in isoprenoid biosynthesis; isopentenyl diphosphate biosynthesis via DXP pathway; isopentenyl diphosphate from 1-deoxy-D-xylulose 5-phosphate: step 5/6. Converts 2C-methyl-D-erythritol 2,4-cyclodiphosphate (ME-2,4cPP) into 1-hydroxy-2-methyl-2-(E)-butenyl 4-diphosphate. In Yersinia enterocolitica serotype O:8 / biotype 1B (strain NCTC 13174 / 8081), this protein is 4-hydroxy-3-methylbut-2-en-1-yl diphosphate synthase (flavodoxin).